The primary structure comprises 211 residues: Endo-1,4-beta-xylanase 6 (211 aa).

A signal peptide spans 1 to 16; sequence MKVTAAFAGLLVTALA. The GH11 domain maps to 19–210; the sequence is APEPVLVSRS…GAGSASVTIS (192 aa). The active-site Nucleophile is the E106. Catalysis depends on E197, which acts as the Proton donor.

It belongs to the glycosyl hydrolase 11 (cellulase G) family.

It localises to the secreted. The catalysed reaction is Endohydrolysis of (1-&gt;4)-beta-D-xylosidic linkages in xylans.. Its pathway is glycan degradation; xylan degradation. In terms of biological role, endo-1,4-beta-xylanase involved in the hydrolysis of xylan, a major structural heterogeneous polysaccharide found in plant biomass representing the second most abundant polysaccharide in the biosphere, after cellulose. The polypeptide is Endo-1,4-beta-xylanase 6 (XYN6) (Aspergillus niger).